Reading from the N-terminus, the 227-residue chain is Class I hydrophobin A (227 aa).

The signal sequence occupies residues 1 to 18; it reads MQFSLSAIVLGLAATVYA. N-linked (GlcNAc...) asparagine glycosylation occurs at asparagine 50. 3 disulfide bridges follow: cysteine 60-cysteine 138, cysteine 68-cysteine 132, and cysteine 69-cysteine 109.

Belongs to the fungal hydrophobin family.

The protein localises to the secreted. It localises to the cell wall. In terms of biological role, aerial growth, conidiation, and dispersal of filamentous fungi in the environment rely upon a capability of their secreting small amphipathic proteins called hydrophobins (HPBs) with low sequence identity. Class I can self-assemble into an outermost layer of rodlet bundles on aerial cell surfaces, conferring cellular hydrophobicity that supports fungal growth, development and dispersal; whereas Class II form highly ordered films at water-air interfaces through intermolecular interactions but contribute nothing to the rodlet structure. In P.expansum, hydrophobins contribute to germination, tolerance to cold stress and mycotoxins patulin and citrinin production. HfbA and HfbB are essential for fungal surface hydrophobicity and HfbA mediates air and water dispersal. The polypeptide is Class I hydrophobin A (Penicillium expansum (Blue mold rot fungus)).